Consider the following 209-residue polypeptide: MGKFQVLDHPLIQHKLSIIRDKNCGTREFRQCVNEIAELMVYEVSRDMPLEDVEVETPITKATTKRLAGKKVVVVPILRAGIGMVDGILELIPAAKVGHIGMYRDEETLQPHEYFVKMPDDLENREMIIVDPMLATGGSAIMAVDALKKRGAKSIKFVCLVAAPEGVKAFREAHPDVDIYSASLDEYLNEDGYIVPGLGDAGDRLFGTK.

5-phospho-alpha-D-ribose 1-diphosphate-binding positions include R79, R104, and 131 to 139 (DPMLATGGS). Uracil-binding positions include I194 and 199–201 (GDA). D200 contacts 5-phospho-alpha-D-ribose 1-diphosphate.

It belongs to the UPRTase family. Mg(2+) serves as cofactor.

It catalyses the reaction UMP + diphosphate = 5-phospho-alpha-D-ribose 1-diphosphate + uracil. It functions in the pathway pyrimidine metabolism; UMP biosynthesis via salvage pathway; UMP from uracil: step 1/1. Its activity is regulated as follows. Allosterically activated by GTP. In terms of biological role, catalyzes the conversion of uracil and 5-phospho-alpha-D-ribose 1-diphosphate (PRPP) to UMP and diphosphate. The sequence is that of Uracil phosphoribosyltransferase from Ligilactobacillus salivarius (strain UCC118) (Lactobacillus salivarius).